Consider the following 370-residue polypeptide: DNA replication and repair protein RecF (370 aa).

30–37 contributes to the ATP binding site; it reads GENAQGKT.

The protein belongs to the RecF family.

Its subcellular location is the cytoplasm. In terms of biological role, the RecF protein is involved in DNA metabolism; it is required for DNA replication and normal SOS inducibility. RecF binds preferentially to single-stranded, linear DNA. It also seems to bind ATP. The chain is DNA replication and repair protein RecF from Staphylococcus aureus (strain USA300).